A 417-amino-acid polypeptide reads, in one-letter code: Acetate kinase (417 aa).

Asparagine 9 is a Mg(2+) binding site. Position 16 (lysine 16) interacts with ATP. Substrate is bound at residue arginine 90. Aspartate 147 (proton donor/acceptor) is an active-site residue. Residues histidine 207–glycine 211, aspartate 282–arginine 284, and glycine 330–asparagine 334 contribute to the ATP site. Glutamate 384 is a Mg(2+) binding site.

It belongs to the acetokinase family. In terms of assembly, homodimer. Mg(2+) serves as cofactor. Mn(2+) is required as a cofactor.

It localises to the cytoplasm. The catalysed reaction is acetate + ATP = acetyl phosphate + ADP. Its pathway is metabolic intermediate biosynthesis; acetyl-CoA biosynthesis; acetyl-CoA from acetate: step 1/2. In terms of biological role, catalyzes the formation of acetyl phosphate from acetate and ATP. Can also catalyze the reverse reaction. The sequence is that of Acetate kinase from Staphylococcus epidermidis (strain ATCC 35984 / DSM 28319 / BCRC 17069 / CCUG 31568 / BM 3577 / RP62A).